The following is a 102-amino-acid chain: Small ribosomal subunit protein uS10 (102 aa).

It belongs to the universal ribosomal protein uS10 family. Part of the 30S ribosomal subunit.

Functionally, involved in the binding of tRNA to the ribosomes. This Clostridium novyi (strain NT) protein is Small ribosomal subunit protein uS10.